Here is a 268-residue protein sequence, read N- to C-terminus: Hydroxyethylthiazole kinase (268 aa).

Met45 contacts substrate. ATP is bound by residues Arg121 and Thr167. Residue Gly194 coordinates substrate.

The protein belongs to the Thz kinase family. The cofactor is Mg(2+).

It carries out the reaction 5-(2-hydroxyethyl)-4-methylthiazole + ATP = 4-methyl-5-(2-phosphooxyethyl)-thiazole + ADP + H(+). It functions in the pathway cofactor biosynthesis; thiamine diphosphate biosynthesis; 4-methyl-5-(2-phosphoethyl)-thiazole from 5-(2-hydroxyethyl)-4-methylthiazole: step 1/1. Catalyzes the phosphorylation of the hydroxyl group of 4-methyl-5-beta-hydroxyethylthiazole (THZ). The sequence is that of Hydroxyethylthiazole kinase from Bacillus cereus (strain ZK / E33L).